The chain runs to 332 residues: Anthranilate phosphoribosyltransferase (332 aa).

5-phospho-alpha-D-ribose 1-diphosphate contacts are provided by residues Gly78, 81-82, Thr86, 88-91, 106-114, and Ala118; these read GD, NVST, and KHGNRAASS. Gly78 lines the anthranilate pocket. Ser90 contributes to the Mg(2+) binding site. Asn109 lines the anthranilate pocket. Arg164 provides a ligand contact to anthranilate. Residues Asp223 and Glu224 each contribute to the Mg(2+) site.

The protein belongs to the anthranilate phosphoribosyltransferase family. In terms of assembly, homodimer. It depends on Mg(2+) as a cofactor.

The catalysed reaction is N-(5-phospho-beta-D-ribosyl)anthranilate + diphosphate = 5-phospho-alpha-D-ribose 1-diphosphate + anthranilate. Its pathway is amino-acid biosynthesis; L-tryptophan biosynthesis; L-tryptophan from chorismate: step 2/5. Functionally, catalyzes the transfer of the phosphoribosyl group of 5-phosphorylribose-1-pyrophosphate (PRPP) to anthranilate to yield N-(5'-phosphoribosyl)-anthranilate (PRA). In Sphingopyxis alaskensis (strain DSM 13593 / LMG 18877 / RB2256) (Sphingomonas alaskensis), this protein is Anthranilate phosphoribosyltransferase.